The chain runs to 161 residues: Phosphopantetheine adenylyltransferase (161 aa).

Ser11 is a substrate binding site. ATP contacts are provided by residues 11-12 (SF) and His19. Residues Lys43, Leu75, and Arg89 each contribute to the substrate site. Residues 90-92 (GLR), Glu100, and 125-131 (YSFISSS) contribute to the ATP site.

It belongs to the bacterial CoaD family. Homohexamer. The cofactor is Mg(2+).

The protein resides in the cytoplasm. The enzyme catalyses (R)-4'-phosphopantetheine + ATP + H(+) = 3'-dephospho-CoA + diphosphate. Its pathway is cofactor biosynthesis; coenzyme A biosynthesis; CoA from (R)-pantothenate: step 4/5. Its function is as follows. Reversibly transfers an adenylyl group from ATP to 4'-phosphopantetheine, yielding dephospho-CoA (dPCoA) and pyrophosphate. The protein is Phosphopantetheine adenylyltransferase of Staphylococcus epidermidis (strain ATCC 35984 / DSM 28319 / BCRC 17069 / CCUG 31568 / BM 3577 / RP62A).